A 312-amino-acid polypeptide reads, in one-letter code: Fibrinogen-like protein 1 (312 aa).

The signal sequence occupies residues 1 to 22 (MAKVFSFILVTTALTMGREISA). Residues 23–61 (LEDCAQEQMRLRAQVRLLETRVKQQQVKIKQLLQENEVQ) are a coiled coil. Residues 74–306 (LGSKRQYADC…SVVMKIRPND (233 aa)) enclose the Fibrinogen C-terminal domain. 2 disulfides stabilise this stretch: Cys83–Cys112 and Cys248–Cys261.

In terms of assembly, homodimer. Interacts (via the Fibrinogen C-terminal domain) with LAG3 (via Ig-like domains 1 and 2). In terms of tissue distribution, under normal conditions, liver-specific.

The protein resides in the secreted. In terms of biological role, immune suppressive molecule that inhibits antigen-specific T-cell activation by acting as a major ligand of LAG3. Responsible for LAG3 T-cell inhibitory function. Binds LAG3 independently from MHC class II (MHC-II). Secreted by, and promotes growth of, hepatocytes. This chain is Fibrinogen-like protein 1, found in Homo sapiens (Human).